Reading from the N-terminus, the 241-residue chain is MQVFIYHTPELTPVHTLPDCAVVIDVLRATTTIATALNAGAEAVQTFSDLKTLMQVSDTWQPEKRLRAGERGGAKVEGCDLGNSPLDCTPDLMKGRRLFISTTNGTRALQRVEESPIVITAAMINRQAAVNYLLDKQPDTVWIVGSGWEGGYSLEDTACAGAIADALQEQSGQMAIGNDEVIASIALYRQWQNDLLGMFHSCSHGQRLLRLHCQEDLKYCANIDSLDVLPIQKEPSILVKL.

The protein belongs to the ComB family. Requires Mg(2+) as cofactor.

It carries out the reaction (2R)-O-phospho-3-sulfolactate + H2O = (2R)-3-sulfolactate + phosphate. The protein is Probable 2-phosphosulfolactate phosphatase of Microcystis aeruginosa (strain NIES-843 / IAM M-2473).